A 460-amino-acid chain; its full sequence is ATP synthase subunit beta (460 aa).

Residue 150-157 (GGAGVGKT) coordinates ATP.

The protein belongs to the ATPase alpha/beta chains family. As to quaternary structure, F-type ATPases have 2 components, CF(1) - the catalytic core - and CF(0) - the membrane proton channel. CF(1) has five subunits: alpha(3), beta(3), gamma(1), delta(1), epsilon(1). CF(0) has three main subunits: a(1), b(2) and c(9-12). The alpha and beta chains form an alternating ring which encloses part of the gamma chain. CF(1) is attached to CF(0) by a central stalk formed by the gamma and epsilon chains, while a peripheral stalk is formed by the delta and b chains.

The protein resides in the cell inner membrane. The enzyme catalyses ATP + H2O + 4 H(+)(in) = ADP + phosphate + 5 H(+)(out). Produces ATP from ADP in the presence of a proton gradient across the membrane. The catalytic sites are hosted primarily by the beta subunits. This chain is ATP synthase subunit beta, found in Enterobacter sp. (strain 638).